The following is a 239-amino-acid chain: Probable transcriptional regulatory protein LMOf2365_0385 (239 aa).

Belongs to the TACO1 family. YeeN subfamily.

The protein resides in the cytoplasm. In Listeria monocytogenes serotype 4b (strain F2365), this protein is Probable transcriptional regulatory protein LMOf2365_0385.